Consider the following 1284-residue polypeptide: MKSTAESKETPSQDESTTSVPCTEAPLVEEGEEASFGAYKRIFTFAGRTELILQAVAILAACASGAGIALQNLIFGQFVTVITDFTNGISTPADFRDNAAELALYFVYLGIARLVLSYTYNTLLTYAAYRIVRNIRHAYLKAALSQEVAYYDFGSGGSIAAQATSNGKLIQAGASDKIGLLFQGLAAFVTAFIIAFVVQWKLTLICICIPVATIGTTGVVAAVEAGHETRILQIHAQANSFAEGILAGVKAVHAFGMRDSLVRKFDEYLVEAHKVGKKISPLLGLLFSAEYTIIYLGYGLAFWQGIHMFGRGEIGTAGDIFTVLLSVVIASINLTLLAPYSIEFSRAASAAAQLFRLIDRESEINPYGKEGLEPERVLGDVELENVTFSYPTRPGITVLDNFSLKVPAGKVTALVGQSGSGKSTIVGLLERWYNPTSGAIRLDGNLISELNVGWLRRNVRLVQQEPVLFQGSVFDNIRYGLVGTPWENASREEQMERVQEAAKLAYAHEFISELTDGYDTLIGERGGLLSGGQKQRVAIARSVVSQPKVLLLDEATSALDPHAETIVQKALDKAAEGRTTIVIAHKLATIRKADNIVVMSKGHIVEQGTHESLIAKDGVYAGLVKIQNLAVNASAHDNVNEEGEGEDVALLEVTETAVTRYPTSIRGRMNSIKDRDDYENHKHMDMLAALAYLVRECPELKWAYLVVLLGCLGGCAMYPGQAILMSRVVEVFTLSGDAMLDKGDFYASMLIVLAAGCLICYLAVGYATNTIAQHLSHWFRRLILHDMLRQDIQFFDREENTTGALVSRIDSYPHAILELMGYNIALVVIAVLQVVTCGILAIAFSWKLGLVVVFGGIPPLVGAGMVRIRVDSRLDRQTSKKYGTSSSIASEAVNAIRTVSSLAIEETVLRRYTEELDHAVSSSVKPMAATMICFGLTQCIEYWFQALGFWYGCRLVSLGETSMYSFFVAFLSVFFAGQASAQLFQWSTSITKGINATNYIAWLHQLQPTVRETPENHDKGPGSGAPIAMDNVRFSYPLRPDAPILKGVNLKINKGQFIAFVGSSGCGKSTMIAMLERFYDPTTGSITIDASTLTDINPISYRNIVALVQQEPTLFQGTIRDNISLGVFNPNTQPFFSDKDAVKSVSDEQIESALRAANAWDFVSSLPQGIYTPAGSGGSQLSGGQRQRIAIARALIRDPKILLLDEATSALDTESEKIVQKALEGAARDGDRLTVAVAHRLSTIKDANVICVFFGGKIAEMGTHQELIVRGGLYRRMCEAQALD.

A compositionally biased stretch (basic and acidic residues) spans 1–11 (MKSTAESKETP). The segment at 1–24 (MKSTAESKETPSQDESTTSVPCTE) is disordered. The next 6 membrane-spanning stretches (helical) occupy residues 55 to 75 (AVAILAACASGAGIALQNLIF), 99 to 119 (AAELALYFVYLGIARLVLSYT), 178 to 198 (IGLLFQGLAAFVTAFIIAFVV), 203 to 223 (TLICICIPVATIGTTGVVAAV), 282 to 302 (LLGLLFSAEYTIIYLGYGLAF), and 320 to 340 (IFTVLLSVVIASINLTLLAPY). The ABC transmembrane type-1 1 domain occupies 55–346 (AVAILAACAS…LAPYSIEFSR (292 aa)). Residues 381-626 (VELENVTFSY…DGVYAGLVKI (246 aa)) enclose the ABC transporter 1 domain. N-linked (GlcNAc...) asparagine glycosylation is found at Asn-385 and Asn-401. 416–423 (GQSGSGKS) is an ATP binding site. Residues Asn-488 and Asn-632 are each glycosylated (N-linked (GlcNAc...) asparagine). 2 consecutive transmembrane segments (helical) span residues 705 to 725 (LVVLLGCLGGCAMYPGQAILM) and 745 to 765 (FYASMLIVLAAGCLICYLAVG). Residues 705–992 (LVVLLGCLGG…LFQWSTSITK (288 aa)) form the ABC transmembrane type-1 2 domain. The N-linked (GlcNAc...) asparagine glycan is linked to Asn-800. 4 helical membrane-spanning segments follow: residues 824-844 (IALVVIAVLQVVTCGILAIAF), 846-866 (WKLGLVVVFGGIPPLVGAGMV), 931-951 (MICFGLTQCIEYWFQALGFWY), and 955-975 (LVSLGETSMYSFFVAFLSVFF). Asn-995 carries an N-linked (GlcNAc...) asparagine glycan. In terms of domain architecture, ABC transporter 2 spans 1027–1280 (IAMDNVRFSY…GGLYRRMCEA (254 aa)). 1062–1069 (GSSGCGKS) is a binding site for ATP. Asn-1122 carries an N-linked (GlcNAc...) asparagine glycan.

The protein belongs to the ABC transporter superfamily. ABCB family. Multidrug resistance exporter (TC 3.A.1.201) subfamily.

It localises to the cell membrane. Its function is as follows. Pleiotropic ABC efflux transporter involved in the protection of the cells against a wide range of toxic compounds. This is ABC multidrug transporter atrC from Emericella nidulans (strain FGSC A4 / ATCC 38163 / CBS 112.46 / NRRL 194 / M139) (Aspergillus nidulans).